We begin with the raw amino-acid sequence, 299 residues long: Ribosomal protein L11 methyltransferase (299 aa).

S-adenosyl-L-methionine contacts are provided by T144, G165, D187, and N229.

This sequence belongs to the methyltransferase superfamily. PrmA family.

The protein localises to the cytoplasm. The catalysed reaction is L-lysyl-[protein] + 3 S-adenosyl-L-methionine = N(6),N(6),N(6)-trimethyl-L-lysyl-[protein] + 3 S-adenosyl-L-homocysteine + 3 H(+). Methylates ribosomal protein L11. The polypeptide is Ribosomal protein L11 methyltransferase (Teredinibacter turnerae (strain ATCC 39867 / T7901)).